A 252-amino-acid polypeptide reads, in one-letter code: Imidazole glycerol phosphate synthase subunit HisF (252 aa).

Catalysis depends on residues Asp-11 and Asp-130.

This sequence belongs to the HisA/HisF family. Heterodimer of HisH and HisF.

It is found in the cytoplasm. It catalyses the reaction 5-[(5-phospho-1-deoxy-D-ribulos-1-ylimino)methylamino]-1-(5-phospho-beta-D-ribosyl)imidazole-4-carboxamide + L-glutamine = D-erythro-1-(imidazol-4-yl)glycerol 3-phosphate + 5-amino-1-(5-phospho-beta-D-ribosyl)imidazole-4-carboxamide + L-glutamate + H(+). Its pathway is amino-acid biosynthesis; L-histidine biosynthesis; L-histidine from 5-phospho-alpha-D-ribose 1-diphosphate: step 5/9. IGPS catalyzes the conversion of PRFAR and glutamine to IGP, AICAR and glutamate. The HisF subunit catalyzes the cyclization activity that produces IGP and AICAR from PRFAR using the ammonia provided by the HisH subunit. The protein is Imidazole glycerol phosphate synthase subunit HisF of Geobacillus sp. (strain WCH70).